Here is a 506-residue protein sequence, read N- to C-terminus: Glutamate--tRNA ligase (506 aa).

A 'HIGH' region motif is present at residues proline 24–glycine 34. Zn(2+) is bound by residues cysteine 121, cysteine 123, cysteine 148, and histidine 150. The 'KMSKS' region signature appears at lysine 266–arginine 270. Lysine 269 provides a ligand contact to ATP.

It belongs to the class-I aminoacyl-tRNA synthetase family. Glutamate--tRNA ligase type 1 subfamily. In terms of assembly, monomer. It depends on Zn(2+) as a cofactor.

The protein resides in the cytoplasm. The catalysed reaction is tRNA(Glu) + L-glutamate + ATP = L-glutamyl-tRNA(Glu) + AMP + diphosphate. Its function is as follows. Catalyzes the attachment of glutamate to tRNA(Glu) in a two-step reaction: glutamate is first activated by ATP to form Glu-AMP and then transferred to the acceptor end of tRNA(Glu). The sequence is that of Glutamate--tRNA ligase from Borrelia duttonii (strain Ly).